We begin with the raw amino-acid sequence, 459 residues long: tRNA modification GTPase MnmE (459 aa).

Residues R22, E85, and R124 each contribute to the (6S)-5-formyl-5,6,7,8-tetrahydrofolate site. Residues 221-380 (GLSTVIVGKP…LEIQIRDLFF (160 aa)) form the TrmE-type G domain. N231 is a K(+) binding site. Residues 231-236 (NVGKSS), 250-256 (TEVAGTT), and 275-278 (DTAG) each bind GTP. Residue S235 coordinates Mg(2+). K(+)-binding residues include T250, V252, and T255. T256 is a binding site for Mg(2+). Residue K459 coordinates (6S)-5-formyl-5,6,7,8-tetrahydrofolate.

The protein belongs to the TRAFAC class TrmE-Era-EngA-EngB-Septin-like GTPase superfamily. TrmE GTPase family. Homodimer. Heterotetramer of two MnmE and two MnmG subunits. K(+) serves as cofactor.

It localises to the cytoplasm. Functionally, exhibits a very high intrinsic GTPase hydrolysis rate. Involved in the addition of a carboxymethylaminomethyl (cmnm) group at the wobble position (U34) of certain tRNAs, forming tRNA-cmnm(5)s(2)U34. The chain is tRNA modification GTPase MnmE from Staphylococcus aureus (strain MSSA476).